The chain runs to 323 residues: tRNA U34 carboxymethyltransferase (323 aa).

Residues Lys-91, Trp-105, Lys-110, Gly-130, 152-154 (DPS), 181-182 (IE), Met-196, Tyr-200, and Arg-315 each bind carboxy-S-adenosyl-L-methionine.

This sequence belongs to the class I-like SAM-binding methyltransferase superfamily. CmoB family. In terms of assembly, homotetramer.

The catalysed reaction is carboxy-S-adenosyl-L-methionine + 5-hydroxyuridine(34) in tRNA = 5-carboxymethoxyuridine(34) in tRNA + S-adenosyl-L-homocysteine + H(+). Functionally, catalyzes carboxymethyl transfer from carboxy-S-adenosyl-L-methionine (Cx-SAM) to 5-hydroxyuridine (ho5U) to form 5-carboxymethoxyuridine (cmo5U) at position 34 in tRNAs. This chain is tRNA U34 carboxymethyltransferase, found in Vibrio vulnificus (strain CMCP6).